A 360-amino-acid chain; its full sequence is Phospho-N-acetylmuramoyl-pentapeptide-transferase (360 aa).

10 helical membrane-spanning segments follow: residues 27–47 (ILSIITALTISLWMGPKLIAW), 73–93 (TMGGIMILTAISVTVFLWADL), 94–114 (TNPYVWAVMFVLLGYGAVGFV), 132–152 (WKYFWQSSIALVVAFALYAYG), 168–188 (VMPQLGLAYILLTYFVIVGTS), 199–219 (GLAIMPTVFVAAGFAFIAWAT), 236–256 (ASELVVVCAAIVGAGFGFLWF), 263–283 (VFMGDVGSLALGGALGTIAVL), 288–308 (FLLVIMGGVFVVETLSVILQV), and 338–358 (VIVRFWIISMLLVLIALATLK).

The protein belongs to the glycosyltransferase 4 family. MraY subfamily. It depends on Mg(2+) as a cofactor.

It is found in the cell inner membrane. The catalysed reaction is UDP-N-acetyl-alpha-D-muramoyl-L-alanyl-gamma-D-glutamyl-meso-2,6-diaminopimeloyl-D-alanyl-D-alanine + di-trans,octa-cis-undecaprenyl phosphate = di-trans,octa-cis-undecaprenyl diphospho-N-acetyl-alpha-D-muramoyl-L-alanyl-D-glutamyl-meso-2,6-diaminopimeloyl-D-alanyl-D-alanine + UMP. It participates in cell wall biogenesis; peptidoglycan biosynthesis. In terms of biological role, catalyzes the initial step of the lipid cycle reactions in the biosynthesis of the cell wall peptidoglycan: transfers peptidoglycan precursor phospho-MurNAc-pentapeptide from UDP-MurNAc-pentapeptide onto the lipid carrier undecaprenyl phosphate, yielding undecaprenyl-pyrophosphoryl-MurNAc-pentapeptide, known as lipid I. The protein is Phospho-N-acetylmuramoyl-pentapeptide-transferase of Aliivibrio fischeri (strain MJ11) (Vibrio fischeri).